The primary structure comprises 407 residues: Leucine-rich repeat-containing protein 42 (407 aa).

5 LRR repeats span residues 138-159, 163-184, 191-211, 223-243, and 247-268; these read VLKS…EEIR, SLEC…FKYI, SLVK…QRLT, NLQL…RYLT, and TLQK…KGFF. A disordered region spans residues 360-389; that stretch reads VQSSPSGETHSTHKSRKRRLSTEEEQSAAP.

The protein belongs to the LRRC42 family.

The chain is Leucine-rich repeat-containing protein 42 (lrrc42) from Danio rerio (Zebrafish).